The chain runs to 803 residues: Translation initiation factor IF-2 (803 aa).

Disordered regions lie at residues 95 to 125 (PVVE…EKAE) and 138 to 178 (EVKE…EREE). The segment covering 111–121 (VPLTSDTTNLN) has biased composition (polar residues). The span at 138–155 (EVKEEAKKTPSEKKETPK) shows a compositional bias: basic and acidic residues. Basic residues predominate over residues 156-167 (KGPRKETRRSRK). The span at 168 to 178 (PDKEDKWEREE) shows a compositional bias: basic and acidic residues. The region spanning 302–471 (PRAPVVTIMG…LLQAEVLELK (170 aa)) is the tr-type G domain. Residues 311 to 318 (GHVDHGKT) form a G1 region. 311–318 (GHVDHGKT) is a GTP binding site. Residues 336 to 340 (GITQH) are G2. The G3 stretch occupies residues 357-360 (DTPG). GTP-binding positions include 357 to 361 (DTPGH) and 411 to 414 (NKID). A G4 region spans residues 411-414 (NKID). The G5 stretch occupies residues 447–449 (SAK).

This sequence belongs to the TRAFAC class translation factor GTPase superfamily. Classic translation factor GTPase family. IF-2 subfamily.

The protein resides in the cytoplasm. One of the essential components for the initiation of protein synthesis. Protects formylmethionyl-tRNA from spontaneous hydrolysis and promotes its binding to the 30S ribosomal subunits. Also involved in the hydrolysis of GTP during the formation of the 70S ribosomal complex. This Coxiella burnetii (strain CbuK_Q154) (Coxiella burnetii (strain Q154)) protein is Translation initiation factor IF-2.